Here is a 128-residue protein sequence, read N- to C-terminus: Small ribosomal subunit protein uS9c (128 aa).

The interval 106–128 (SRIKERKKYGLKKARKAPQFSKR) is disordered. Over residues 109–128 (KERKKYGLKKARKAPQFSKR) the composition is skewed to basic residues.

Belongs to the universal ribosomal protein uS9 family.

It is found in the plastid. It localises to the chloroplast. The polypeptide is Small ribosomal subunit protein uS9c (rps9) (Cyanidium caldarium (Red alga)).